The following is a 621-amino-acid chain: tRNA uridine 5-carboxymethylaminomethyl modification enzyme MnmG (621 aa).

Position 8-13 (8-13 (GAGHAG)) interacts with FAD. 269 to 283 (GPRYCPSVEDKIFRF) provides a ligand contact to NAD(+).

Belongs to the MnmG family. In terms of assembly, homodimer. Heterotetramer of two MnmE and two MnmG subunits. Requires FAD as cofactor.

It localises to the cytoplasm. In terms of biological role, NAD-binding protein involved in the addition of a carboxymethylaminomethyl (cmnm) group at the wobble position (U34) of certain tRNAs, forming tRNA-cmnm(5)s(2)U34. This chain is tRNA uridine 5-carboxymethylaminomethyl modification enzyme MnmG, found in Chlorobium phaeobacteroides (strain DSM 266 / SMG 266 / 2430).